The following is a 157-amino-acid chain: S-ribosylhomocysteine lyase (157 aa).

Fe cation is bound by residues H54, H58, and C126.

This sequence belongs to the LuxS family. Homodimer. The cofactor is Fe cation.

The enzyme catalyses S-(5-deoxy-D-ribos-5-yl)-L-homocysteine = (S)-4,5-dihydroxypentane-2,3-dione + L-homocysteine. In terms of biological role, involved in the synthesis of autoinducer 2 (AI-2) which is secreted by bacteria and is used to communicate both the cell density and the metabolic potential of the environment. The regulation of gene expression in response to changes in cell density is called quorum sensing. Catalyzes the transformation of S-ribosylhomocysteine (RHC) to homocysteine (HC) and 4,5-dihydroxy-2,3-pentadione (DPD). The chain is S-ribosylhomocysteine lyase from Bacillus cereus (strain 03BB102).